Consider the following 391-residue polypeptide: GDSL esterase/lipase 22 (391 aa).

Positions 1–29 (MMANNCNLVSVLCVILVLTLFHNPITVAG) are cleaved as a signal peptide. The active-site Nucleophile is serine 43. 3 N-linked (GlcNAc...) asparagine glycosylation sites follow: asparagine 105, asparagine 165, and asparagine 288. Active-site residues include aspartate 322 and histidine 325. A disordered region spans residues 372 to 391 (PATVHASDSSSSTSRGYEYY).

It belongs to the 'GDSL' lipolytic enzyme family. In terms of assembly, component of the PYK10 complex, at least composed of PYK10/BGLU23, BGLU21, BGLU22, JAL22, JAL23, PBP1/JAL30, PBP2/JAL31, JAL32, JAL33, JAL34, JAL35, GLL22 and GLL23.

It localises to the secreted. In Arabidopsis thaliana (Mouse-ear cress), this protein is GDSL esterase/lipase 22 (GLL22).